The following is a 462-amino-acid chain: 3-isopropylmalate dehydratase large subunit (462 aa).

The [4Fe-4S] cluster site is built by cysteine 337, cysteine 397, and cysteine 400.

This sequence belongs to the aconitase/IPM isomerase family. LeuC type 1 subfamily. Heterodimer of LeuC and LeuD. Requires [4Fe-4S] cluster as cofactor.

The enzyme catalyses (2R,3S)-3-isopropylmalate = (2S)-2-isopropylmalate. Its pathway is amino-acid biosynthesis; L-leucine biosynthesis; L-leucine from 3-methyl-2-oxobutanoate: step 2/4. Catalyzes the isomerization between 2-isopropylmalate and 3-isopropylmalate, via the formation of 2-isopropylmaleate. The chain is 3-isopropylmalate dehydratase large subunit from Listeria innocua serovar 6a (strain ATCC BAA-680 / CLIP 11262).